The sequence spans 303 residues: MPKPHQVQVIKDRETQLREQQEAESKRRTYRDVKEETRKKHKKAHFEASPTPEESTSDKISLPRKRYYRQRAHSNPFSDHRLEYPRSPDDMNWEKLFPGFYDEETKQMTSSVEIADVGCGYGGLLTKLAPEFPNSLILGMEIRVQVTQYVEDRIIALRNKHEDEDVNFQNIAVLRGNAMKFLPNFFRKGQLSKMFFCFPDPHFKQRKHKARIITNTLLSEYAYVLKEGGVVYTITDVEDLHNWMVKHLEEHPLFERLSKEWEEQDTCVSIMFNSTEEGQKVTRNKGSKWIACYRRLPNPEECV.

A disordered region spans residues Met1–Arg64. Basic and acidic residues predominate over residues Ile10–Arg38. S-adenosyl-L-methionine contacts are provided by residues Gly118, Glu141 to Ile142, Asn177 to Ala178, and Cys197. The active site involves Asp200. Residue Thr275–Glu277 coordinates S-adenosyl-L-methionine.

Belongs to the class I-like SAM-binding methyltransferase superfamily. TrmB family. Forms a complex with TRM82.

Its subcellular location is the nucleus. It carries out the reaction guanosine(46) in tRNA + S-adenosyl-L-methionine = N(7)-methylguanosine(46) in tRNA + S-adenosyl-L-homocysteine. The protein operates within tRNA modification; N(7)-methylguanine-tRNA biosynthesis. Functionally, catalyzes the formation of N(7)-methylguanine at position 46 (m7G46) in tRNA. This Scheffersomyces stipitis (strain ATCC 58785 / CBS 6054 / NBRC 10063 / NRRL Y-11545) (Yeast) protein is tRNA (guanine-N(7)-)-methyltransferase.